Here is a 205-residue protein sequence, read N- to C-terminus: MYRIKDEWGEFLVRLARRAVEEYVRHKRVIEPPEDTPTELWEKMGVFVTLNRHNVPPQMALRGCIGFPLPIYPLVEATIKAAIYAAVDDPRFPPVQPEELDELTVEVSVLTPPELVEGPPEGRPKKIKVGRDGLLIEKGIYSGLLLPQVPVEWGWDEEEFLAQTCWKAGLPPDCWLDPDTKVYRFTAEIFEEEYPRGPVRRKPLV.

Residues 7–201 enclose the AMMECR1 domain; sequence EWGEFLVRLA…EEYPRGPVRR (195 aa).

The protein is Protein TK0174 of Thermococcus kodakarensis (strain ATCC BAA-918 / JCM 12380 / KOD1) (Pyrococcus kodakaraensis (strain KOD1)).